Consider the following 139-residue polypeptide: Putative truncated protein trichome birefringence-like 46 (139 aa).

It belongs to the PC-esterase family. TBL subfamily.

The protein is Putative truncated protein trichome birefringence-like 46 (TBL46) of Arabidopsis thaliana (Mouse-ear cress).